The primary structure comprises 272 residues: Phosphate import ATP-binding protein PstB (272 aa).

Residues 18-257 (VSMQNVTISY…FNDTQSIFNS (240 aa)) enclose the ABC transporter domain. An ATP-binding site is contributed by 50 to 57 (GPSGCGKS).

It belongs to the ABC transporter superfamily. Phosphate importer (TC 3.A.1.7) family. The complex is composed of two ATP-binding proteins (PstB), two transmembrane proteins (PstC and PstA) and a solute-binding protein (PstS).

It localises to the cell inner membrane. It carries out the reaction phosphate(out) + ATP + H2O = ADP + 2 phosphate(in) + H(+). Part of the ABC transporter complex PstSACB involved in phosphate import. Responsible for energy coupling to the transport system. The sequence is that of Phosphate import ATP-binding protein PstB from Synechococcus sp. (strain CC9902).